A 475-amino-acid polypeptide reads, in one-letter code: tRNA-dihydrouridine(16/17) synthase [NAD(P)(+)]-like (475 aa).

FMN is bound by residues 23–25 (PMV) and glutamine 79. The Proton donor role is filled by cysteine 108. FMN is bound by residues lysine 147, histidine 175, 208 to 210 (NGN), and 232 to 233 (AE). The segment at 343-388 (GPREGSKENSGGRSKRALEEEEGSMEGLSKNKLKKQLRNPHKTFDP) is disordered. Basic residues predominate over residues 373–383 (NKLKKQLRNPH).

Belongs to the Dus family. Dus1 subfamily. FMN is required as a cofactor.

The protein localises to the cytoplasm. It is found in the nucleus. The enzyme catalyses 5,6-dihydrouridine(16) in tRNA + NADP(+) = uridine(16) in tRNA + NADPH + H(+). It carries out the reaction 5,6-dihydrouridine(16) in tRNA + NAD(+) = uridine(16) in tRNA + NADH + H(+). It catalyses the reaction 5,6-dihydrouridine(17) in tRNA + NAD(+) = uridine(17) in tRNA + NADH + H(+). The catalysed reaction is 5,6-dihydrouridine(17) in tRNA + NADP(+) = uridine(17) in tRNA + NADPH + H(+). Its function is as follows. Catalyzes the synthesis of dihydrouridine, a modified base found in the D-loop of most tRNAs. Specifically modifies U16 and U17 in cytoplasmic tRNAs. Affects the level of some mature tRNA and thereby the total cellular translation. The sequence is that of tRNA-dihydrouridine(16/17) synthase [NAD(P)(+)]-like (Dus1l) from Mus musculus (Mouse).